A 337-amino-acid polypeptide reads, in one-letter code: G-protein coupled receptor 26 (337 aa).

At M1–G10 the chain is on the extracellular side. Residues L11–L31 form a helical membrane-spanning segment. At H32 to N47 the chain is on the cytoplasmic side. The helical transmembrane segment at L48–V68 threads the bilayer. Over A69–L81 the chain is Extracellular. C79 and C156 are disulfide-bonded. The helical transmembrane segment at A82–I102 threads the bilayer. The Cytoplasmic segment spans residues D103–A123. The chain crosses the membrane as a helical span at residues A124–L144. The Extracellular segment spans residues S145 to R168. Residues F169–C189 form a helical membrane-spanning segment. Residues F190–T245 lie on the Cytoplasmic side of the membrane. The helical transmembrane segment at F246 to F266 threads the bilayer. Over S267–G276 the chain is Extracellular. The helical transmembrane segment at V277–L297 threads the bilayer. Over R298–E337 the chain is Cytoplasmic.

This sequence belongs to the G-protein coupled receptor 1 family. As to expression, detected in extracts of several brain regions including striatum, pons, cerebellum and cortex. Not detected in numerous peripheral tissue extracts, except in testis. In the brain, detected in cortical structures including the anterior cingulate area, posterior cingulate and the frontoparietal, somatosensory and piriform cortices. Prominent also in the olfactory tubercle, the islands of Calleja, ventromedial and posterior nuclei of the hypothalamus, the medial septal nucleus, nucleus of the diagonal band and the ventral tegmental area. Localized also to hippocampal structures, with signals strongest over the CA2 and CA3 regions of Ammon's horn and less so over the dentate gyrus. Expressed in the caudate putamen only in its most caudal portion, with a decreasing gradient of signal from the dorsal to ventral aspect. Strong expression associated with a single pontine structure, the inferior olivary nucleus.

It is found in the cell membrane. Functionally, orphan receptor. Displays a significant level of constitutive activity. Its effect is mediated by G(s)-alpha protein that stimulate adenylate cyclase, resulting in an elevation of intracellular cAMP. The polypeptide is G-protein coupled receptor 26 (Gpr26) (Rattus norvegicus (Rat)).